Here is a 205-residue protein sequence, read N- to C-terminus: Protein Nef (205 aa).

Gly2 carries N-myristoyl glycine; by host lipidation. Phosphoserine; by host is present on Ser6. Positions 62-65 (EEEE) are acidic; interacts with host PACS1 and PACS2; stabilizes the interaction of NEF/MHC-I with host AP1M1; necessary for MHC-I internalization. Positions 69–78 (PVRPQVPVRP) are SH3-binding; interaction with Src family tyrosine kinases. Positions 72 to 75 (PQVP) match the PxxP; stabilizes the interaction of NEF/MHC-I with host AP1M1; necessary for MHC-I internalization motif. Residues 108 to 124 (DTLDLWVYHTQGYFPDW) are mediates dimerization, Nef-PTE1 interaction. The binding to ATP6V1H stretch occupies residues 148 to 180 (VDPEEVEKANEGENNCLLHPMSQHGMEDEDREV). The Dileucine internalization motif; necessary for CD4 internalization motif lies at 164–165 (LL). The short motif at 174-175 (ED) is the Diacidic; necessary for CD4 internalization element.

It belongs to the lentivirus primate group Nef protein family. Monomer; cytosolic form. Homodimer; membrane bound form. Interacts with Nef associated p21-activated kinase (PAK2); this interaction activates PAK2. Associates with the Nef-MHC-I-AP1 complex; this complex is required for MHC-I internalization. Interacts (via C-terminus) with host PI3-kinase. Interacts with host PACS1; this interaction seems to be weak. Interacts with host PACS2. Interacts with host LCK and MAPK3; these interactions inhibit the kinase activity of the latter. Interacts with host ATP6V1H; this interaction may play a role in CD4 endocytosis. Associates with the CD4-Nef-AP2 complex; this complex is required for CD4 internalization. Interacts with host AP2 subunit alpha and AP2 subunit sigma2. Interacts with TCR-zeta chain; this interaction up-regulates the Fas ligand (FasL) surface expression. Interacts with host HCK, LYN, and SRC; these interactions activate the Src family kinases. Interacts with MAP3K5; this interaction inhibits the Fas and TNFR-mediated death signals. Interacts with beta-COP and PTE1. Interacts with human RACK1; this increases Nef phosphorylation by PKC. Interacts with TP53; this interaction decreases the half-life of TP53, protecting the infected cell against p53-mediated apoptosis. Post-translationally, the virion-associated Nef proteins are cleaved by the viral protease to release the soluble C-terminal core protein. Nef is probably cleaved concomitantly with viral structural proteins on maturation of virus particles. In terms of processing, myristoylated. Phosphorylated on serine residues, probably by host PKCdelta and theta.

The protein resides in the host cell membrane. The protein localises to the virion. Its subcellular location is the secreted. It is found in the host Golgi apparatus membrane. Functionally, factor of infectivity and pathogenicity, required for optimal virus replication. Alters numerous pathways of T-lymphocyte function and down-regulates immunity surface molecules in order to evade host defense and increase viral infectivity. Alters the functionality of other immunity cells, like dendritic cells, monocytes/macrophages and NK cells. Its function is as follows. In infected CD4(+) T-lymphocytes, down-regulates the surface MHC-I, mature MHC-II, CD4, CD28, CCR5 and CXCR4 molecules. Mediates internalization and degradation of host CD4 through the interaction of with the cytoplasmic tail of CD4, the recruitment of AP-2 (clathrin adapter protein complex 2), internalization through clathrin coated pits, and subsequent transport to endosomes and lysosomes for degradation. Diverts host MHC-I molecules to the trans-Golgi network-associated endosomal compartments by an endocytic pathway to finally target them for degradation. MHC-I down-regulation may involve AP-1 (clathrin adapter protein complex 1) or possibly Src family kinase-ZAP70/Syk-PI3K cascade recruited by PACS2. In consequence infected cells are masked for immune recognition by cytotoxic T-lymphocytes. Decreasing the number of immune receptors also prevents reinfection by more HIV particles (superinfection). Down-regulates host SERINC3 and SERINC5 thereby excluding these proteins from the viral particles. Virion infectivity is drastically higher when SERINC3 or SERINC5 are excluded from the viral envelope, because these host antiviral proteins impair the membrane fusion event necessary for subsequent virion penetration. In terms of biological role, bypasses host T-cell signaling by inducing a transcriptional program nearly identical to that of anti-CD3 cell activation. Interaction with TCR-zeta chain up-regulates the Fas ligand (FasL). Increasing surface FasL molecules and decreasing surface MHC-I molecules on infected CD4(+) cells send attacking cytotoxic CD8+ T-lymphocytes into apoptosis. Plays a role in optimizing the host cell environment for viral replication without causing cell death by apoptosis. Protects the infected cells from apoptosis in order to keep them alive until the next virus generation is ready to strike. Inhibits the Fas and TNFR-mediated death signals by blocking MAP3K5/ASK1. Decreases the half-life of TP53, protecting the infected cell against p53-mediated apoptosis. Inhibits the apoptotic signals regulated by the Bcl-2 family proteins through the formation of a Nef/PI3-kinase/PAK2 complex that leads to activation of PAK2 and induces phosphorylation of host BAD. Functionally, extracellular Nef protein targets CD4(+) T-lymphocytes for apoptosis by interacting with CXCR4 surface receptors. The chain is Protein Nef from Human immunodeficiency virus type 1 group M subtype F1 (isolate VI850) (HIV-1).